Consider the following 289-residue polypeptide: Glycerol facilitator-aquaporin gla (289 aa).

Transmembrane regions (helical) follow at residues Ile10–Val30 and Ser41–Gly61. Residues Asn68–Ala70 carry the NPA 1 motif. 3 helical membrane-spanning segments follow: residues Ala87–Val107, Phe151–Ser171, and Met209–Pro229. The short motif at Asn235 to Ala237 is the NPA 2 element. Residues Trp264–Phe284 form a helical membrane-spanning segment.

It belongs to the MIP/aquaporin (TC 1.A.8) family.

It is found in the cell membrane. In terms of biological role, mixed channel protein that transports both water and glycerol. This chain is Glycerol facilitator-aquaporin gla (gla), found in Lactococcus lactis subsp. lactis (strain IL1403) (Streptococcus lactis).